Reading from the N-terminus, the 602-residue chain is uncharacterized protein (602 aa).

Belongs to the IIV-6 098R family.

This is an uncharacterized protein from Acheta domesticus (House cricket).